A 51-amino-acid chain; its full sequence is MANGTILAHSLRHHTPPFPRMPLGYSSSRAVRRSRWFLVLISCCCCCFRRC.

This is an uncharacterized protein from Saccharomyces cerevisiae (strain ATCC 204508 / S288c) (Baker's yeast).